The primary structure comprises 240 residues: DNA repair protein RecO (240 aa).

This sequence belongs to the RecO family.

Its function is as follows. Involved in DNA repair and RecF pathway recombination. This is DNA repair protein RecO from Actinobacillus pleuropneumoniae serotype 3 (strain JL03).